The primary structure comprises 419 residues: MFIDKVNTYLAAGRGGDGCISFRREKYVPYGGPDGGNGGNGGDIYFESDQHKTTLLDLSYRPKFKAEDGQKGSSGDKSGRYGEDLIIKIPLGTLIFKNGEFFADLKTVGERILIVKGGRGGRGNASFKTGRHTVPRIAEKGAPGETAEVNLELRLIADVGLLGLPNAGKSTLLSQISAAKPKIADYPFTTLAPNLGVVNYKGKHFTAADIPGIIEGAYKGIGLGFEFLRHIRRTKVLIHVIDVNGFDGRDPYENYKIINNELKKYSKHLAKKHVIIVLNKIDSAVSLEQIKNFKKHLKVKKLFETSAATGYGIDALLKEMLRMLEKPVAFSTEGEVEPLHVKKYIYEPEFKISIENGIFVATGAKVETLTEVTKFNEDESLRRYRNILKKMGLEIELKKMGARPGDTVRIGDFEFTFEK.

Residues 1–156 (MFIDKVNTYL…AEVNLELRLI (156 aa)) form the Obg domain. One can recognise an OBG-type G domain in the interval 157-325 (ADVGLLGLPN…LLKEMLRMLE (169 aa)). GTP is bound by residues 163–170 (GLPNAGKS), 188–192 (FTTLA), 209–212 (DIPG), 279–282 (NKID), and 306–308 (SAA). The Mg(2+) site is built by Ser170 and Thr190. In terms of domain architecture, OCT spans 342–419 (KKYIYEPEFK…IGDFEFTFEK (78 aa)).

It belongs to the TRAFAC class OBG-HflX-like GTPase superfamily. OBG GTPase family. Monomer. Mg(2+) is required as a cofactor.

The protein resides in the cytoplasm. In terms of biological role, an essential GTPase which binds GTP, GDP and possibly (p)ppGpp with moderate affinity, with high nucleotide exchange rates and a fairly low GTP hydrolysis rate. Plays a role in control of the cell cycle, stress response, ribosome biogenesis and in those bacteria that undergo differentiation, in morphogenesis control. The sequence is that of GTPase Obg from Endomicrobium trichonymphae.